The primary structure comprises 188 residues: dCTP deaminase (188 aa).

DCTP contacts are provided by residues 111 to 116, 135 to 137, Q156, Y170, and Q180; these read KSTYAR and VLE. E137 (proton donor/acceptor) is an active-site residue.

The protein belongs to the dCTP deaminase family. Homotrimer.

The catalysed reaction is dCTP + H2O + H(+) = dUTP + NH4(+). It participates in pyrimidine metabolism; dUMP biosynthesis; dUMP from dCTP (dUTP route): step 1/2. In terms of biological role, catalyzes the deamination of dCTP to dUTP. In Protochlamydia amoebophila (strain UWE25), this protein is dCTP deaminase.